The chain runs to 292 residues: Phosphatidylglycerol--prolipoprotein diacylglyceryl transferase (292 aa).

A run of 4 helical transmembrane segments spans residues 24–44 (ISVH…LLIA), 65–85 (FFIW…VLIY), 110–130 (GISG…AIIF), and 136–156 (QSFW…YVFG). Arginine 157 provides a ligand contact to a 1,2-diacyl-sn-glycero-3-phospho-(1'-sn-glycerol). 3 consecutive transmembrane segments (helical) span residues 192 to 212 (SQLF…ICLL), 219 to 239 (GTLL…CEYF), and 256 to 276 (GQIL…FVFV).

This sequence belongs to the Lgt family.

It is found in the cell inner membrane. It catalyses the reaction L-cysteinyl-[prolipoprotein] + a 1,2-diacyl-sn-glycero-3-phospho-(1'-sn-glycerol) = an S-1,2-diacyl-sn-glyceryl-L-cysteinyl-[prolipoprotein] + sn-glycerol 1-phosphate + H(+). The protein operates within protein modification; lipoprotein biosynthesis (diacylglyceryl transfer). Its function is as follows. Catalyzes the transfer of the diacylglyceryl group from phosphatidylglycerol to the sulfhydryl group of the N-terminal cysteine of a prolipoprotein, the first step in the formation of mature lipoproteins. The polypeptide is Phosphatidylglycerol--prolipoprotein diacylglyceryl transferase (Helicobacter hepaticus (strain ATCC 51449 / 3B1)).